The following is a 138-amino-acid chain: MIYIDASNHIYGRLSSYVAKKLLNGESITIVNASKVVITGRKEFIIDKFNNLRNTGSIRKGPYYPKTADRILKRSIGDMLPKKKTHGMEALKRCMVYANVPKSLENKNFERIESAMNKKVTGFITLGEISKILGETYE.

It belongs to the universal ribosomal protein uL13 family. As to quaternary structure, part of the 50S ribosomal subunit.

Functionally, this protein is one of the early assembly proteins of the 50S ribosomal subunit, although it is not seen to bind rRNA by itself. It is important during the early stages of 50S assembly. In Picrophilus torridus (strain ATCC 700027 / DSM 9790 / JCM 10055 / NBRC 100828 / KAW 2/3), this protein is Large ribosomal subunit protein uL13.